The chain runs to 282 residues: Putative glycosyltransferase HI_0765 (282 aa).

It belongs to the glycosyltransferase 25 family.

The protein is Putative glycosyltransferase HI_0765 of Haemophilus influenzae (strain ATCC 51907 / DSM 11121 / KW20 / Rd).